The chain runs to 227 residues: Ribonuclease 3 (227 aa).

The region spanning 6–128 (ASDYQQRIGY…VIAAIYLDAD (123 aa)) is the RNase III domain. Glu41 contacts Mg(2+). Residue Asp45 is part of the active site. Residues Asp114 and Glu117 each contribute to the Mg(2+) site. Glu117 is an active-site residue. A DRBM domain is found at 155–225 (DPKTRLQEWL…ASHAIDQLDS (71 aa)). The segment covering 203–212 (GEGSSRRLAE) has biased composition (basic and acidic residues). The tract at residues 203 to 227 (GEGSSRRLAEQDAASHAIDQLDSNK) is disordered.

The protein belongs to the ribonuclease III family. In terms of assembly, homodimer. Requires Mg(2+) as cofactor.

The protein localises to the cytoplasm. It catalyses the reaction Endonucleolytic cleavage to 5'-phosphomonoester.. Its function is as follows. Digests double-stranded RNA. Involved in the processing of primary rRNA transcript to yield the immediate precursors to the large and small rRNAs (23S and 16S). Processes some mRNAs, and tRNAs when they are encoded in the rRNA operon. Processes pre-crRNA and tracrRNA of type II CRISPR loci if present in the organism. This is Ribonuclease 3 from Xylella fastidiosa (strain 9a5c).